The primary structure comprises 419 residues: Inward rectifier potassium channel 16 (419 aa).

Residues M1 to D67 lie on the Cytoplasmic side of the membrane. Residues T68–L94 traverse the membrane as a helical segment. The Extracellular segment spans residues I95–S117. An intramembrane region (helical; Pore-forming) is located at residues F118 to Y134. Positions T131–Y136 match the Selectivity filter motif. Residues G135–C143 are Extracellular-facing. The helical transmembrane segment at S144 to K171 threads the bilayer. Over M172 to M419 the chain is Cytoplasmic. Residues S358, S374, and S376 each carry the phosphoserine modification.

Belongs to the inward rectifier-type potassium channel (TC 1.A.2.1) family. KCNJ16 subfamily. As to quaternary structure, it forms heteromeric channels with Kir4.1/KCNJ10; this interaction is required for KCNJ16 localization to the basolateral membrane in kidney cells. As a heteromer with KCNJ10, may interact with MAGI1; this interaction may facilitate KCNJ10/KCNJ16 potassium channel expression at the basolateral membrane in kidney cells. May form heteromers with Kir2.1/KCNJ2. Can form heteromeric channels with Kir4.2/KCNJ15. As to expression, abundantly expressed in the proximal and distal segments of the nephron.

Its subcellular location is the membrane. The protein localises to the basolateral cell membrane. It carries out the reaction K(+)(in) = K(+)(out). Channel activity is strongly regulated by variations of cytosolic pH; channels are activated by alkaline and inhibited by acidic pH values. Activated by phosphatidylinositol 4,5 biphosphate (PtdIns(4,5)P2). Functionally, inward rectifier potassium channels are characterized by a greater tendency to allow potassium to flow into the cell rather than out of it. Their voltage dependence is regulated by the concentration of extracellular potassium; as external potassium is raised, the voltage range of the channel opening shifts to more positive voltages. The inward rectification is mainly due to the blockage of outward current by internal magnesium. KCNJ16 may be involved in the regulation of fluid and pH balance. In the kidney, together with KCNJ10, mediates basolateral K(+) recycling in distal tubules; this process is critical for Na(+) reabsorption at the tubules. The sequence is that of Inward rectifier potassium channel 16 (Kcnj16) from Mus musculus (Mouse).